A 55-amino-acid polypeptide reads, in one-letter code: Eclosion hormone (55 aa).

This sequence belongs to the insect eclosion hormone family.

The protein localises to the secreted. Functionally, neuropeptide that triggers the performance of ecdysis behaviors at the end of a molt. It triggers adult behavior patterns: larval, pupal and adult ecdysis, and plasticization during the molt. The protein is Eclosion hormone of Romalea microptera (Eastern lubber grasshopper).